Here is a 609-residue protein sequence, read N- to C-terminus: QWRF motif-containing protein 4 (609 aa).

Disordered stretches follow at residues 1–227 and 271–369; these read MQVG…IRGN and EVSS…TAQS. Polar residues-rich tracts occupy residues 11-21 and 46-57; these read GKQQQSVSDAT and EVSSRYRSPTPT. 2 stretches are compositionally biased toward low complexity: residues 98 to 110 and 129 to 143; these read PVSD…PVSS and SLSV…SVPV. Polar residues predominate over residues 151 to 180; it reads VTSSTDRTLRPSSSNIAHKQQSETTSVTRK. 2 stretches are compositionally biased toward low complexity: residues 271 to 285 and 302 to 332; these read EVSS…SSTE and SAPG…PSRG. Positions 407–410 match the QWRF motif motif; sequence QWRF. The segment at 588 to 609 is disordered; that stretch reads EEEVRDDAESSPLLPLSKFQWP.

It belongs to the QWRF family.

In Arabidopsis thaliana (Mouse-ear cress), this protein is QWRF motif-containing protein 4 (QWRF4).